The chain runs to 181 residues: Ferritin (181 aa).

The Ferritin-like diiron domain occupies R6–G155. The Fe cation site is built by E23, E58, H61, E103, and Q137.

It belongs to the ferritin family. As to quaternary structure, oligomer of 12 or 24 subunits. The functional molecule is roughly spherical and contains a central cavity into which the polymeric mineral iron core is deposited. In terms of processing, the N-terminus is blocked.

The protein resides in the cytoplasm. The catalysed reaction is 4 Fe(2+) + O2 + 4 H(+) = 4 Fe(3+) + 2 H2O. Stores iron in a soluble, non-toxic, readily available form. Important for iron homeostasis. Has ferroxidase activity. Iron is taken up in the ferrous form and deposited as ferric hydroxides after oxidation. This is Ferritin from Pacifastacus leniusculus (Signal crayfish).